The chain runs to 291 residues: MRNTSKEVQSTSYRYAPCDWYYHLPVKRSEKPVGAPPASQIPGLSDLRDSPNVNLPRARRYWIKETDSEYVKLAKQGGRPDLLKHFAPGTRQGSPVAYSLPDWYIHHSKPPTSHQREVPVVSIPDYMVYEEFNPDQANGSYESRQGPFDFDRKTIWQREAEELENVKRKVKLPAINSKNPSKTGTPVSHKEPERSRLSLPPMPGQKNSSPTNFSKLISNGYKDEWLQQQKAEADRRTPKTSRASVSSKSTEDSKSNQDTETPENPETPEGSEKTPDAEVSSPSESTPAELK.

Disordered stretches follow at residues serine 29–serine 50 and arginine 168–lysine 291. Serine 50 bears the Phosphoserine mark. Composition is skewed to polar residues over residues asparagine 176–proline 186 and glutamine 205–isoleucine 217. Positions tyrosine 221 to threonine 237 are enriched in basic and acidic residues. Polar residues predominate over residues serine 280–lysine 291.

This is an uncharacterized protein from Mus musculus (Mouse).